Reading from the N-terminus, the 413-residue chain is S-adenosylmethionine synthase (413 aa).

Residue H15 coordinates ATP. A Mg(2+)-binding site is contributed by D17. K(+) is bound at residue E43. The L-methionine site is built by E56 and Q100. Residues 100 to 110 (QSPDISQGVNE) form a flexible loop region. ATP-binding positions include 171 to 173 (DGK), 248 to 249 (KF), D257, 263 to 264 (RK), A280, and K284. Residue D257 coordinates L-methionine. K288 is a binding site for L-methionine.

It belongs to the AdoMet synthase family. In terms of assembly, homotetramer; dimer of dimers. Mg(2+) serves as cofactor. K(+) is required as a cofactor.

The protein resides in the cytoplasm. The catalysed reaction is L-methionine + ATP + H2O = S-adenosyl-L-methionine + phosphate + diphosphate. It functions in the pathway amino-acid biosynthesis; S-adenosyl-L-methionine biosynthesis; S-adenosyl-L-methionine from L-methionine: step 1/1. Functionally, catalyzes the formation of S-adenosylmethionine (AdoMet) from methionine and ATP. The overall synthetic reaction is composed of two sequential steps, AdoMet formation and the subsequent tripolyphosphate hydrolysis which occurs prior to release of AdoMet from the enzyme. This is S-adenosylmethionine synthase from Prochlorococcus marinus subsp. pastoris (strain CCMP1986 / NIES-2087 / MED4).